The following is a 520-amino-acid chain: J protein JJJ2 (520 aa).

One can recognise a J domain in the interval 7-71 (TYYSVLGLPT…SSKQEYDAIL (65 aa)). Disordered stretches follow at residues 82–257 (LGYK…DLQN) and 389–409 (FESS…RGRP). Residues 91–100 (QNQSNNLNQQ) show a composition bias toward low complexity. Polar residues predominate over residues 152 to 182 (TSKNSKEQQGSQETTNTSENLQRNAKGNKNN). Residues 397–409 (ENHRSDFNLRGRP) are compositionally biased toward basic and acidic residues.

Its subcellular location is the cytoplasm. The protein localises to the nucleus. This is J protein JJJ2 (JJJ2) from Vanderwaltozyma polyspora (strain ATCC 22028 / DSM 70294 / BCRC 21397 / CBS 2163 / NBRC 10782 / NRRL Y-8283 / UCD 57-17) (Kluyveromyces polysporus).